The primary structure comprises 181 residues: uncharacterized protein (181 aa).

The segment at 126-148 (SYKDKEEEEDEDPEEDDDDPRVQ) is disordered. The segment covering 131-144 (EEEEDEDPEEDDDD) has biased composition (acidic residues).

This sequence belongs to the chlamydial CPn_0422/CT_273/TC_0545 family.

This is an uncharacterized protein from Chlamydia pneumoniae (Chlamydophila pneumoniae).